The following is a 332-amino-acid chain: Large ribosomal subunit protein mL44 (332 aa).

A mitochondrion-targeting transit peptide spans 1–30 (MASGLVRLLQQGPRCLLAPVAPKLVPPVRG). Residues 86–228 (DLLKTAFVNS…LITQMTGKEL (143 aa)) form the RNase III domain. Positions 236–306 (NPMGLLVEEL…ARVALRKLYG (71 aa)) constitute a DRBM domain.

This sequence belongs to the ribonuclease III family. Mitochondrion-specific ribosomal protein mL44 subfamily. As to quaternary structure, component of the mitochondrial ribosome large subunit (39S) which comprises a 16S rRNA and about 50 distinct proteins.

The protein localises to the mitochondrion. Component of the 39S subunit of mitochondrial ribosome. May have a function in the assembly/stability of nascent mitochondrial polypeptides exiting the ribosome. The polypeptide is Large ribosomal subunit protein mL44 (MRPL44) (Pongo abelii (Sumatran orangutan)).